A 288-amino-acid polypeptide reads, in one-letter code: Probable anion import ATP-binding protein HVO_1886 (288 aa).

The segment covering 1 to 18 (MTTERPDAGDSGSEKPDE) has biased composition (basic and acidic residues). Positions 1–33 (MTTERPDAGDSGSEKPDETAAPDPAANGARRSK) are disordered. Positions 36–282 (LAARSLGHGF…PDDDRVRQFV (247 aa)) constitute an ABC transporter domain. 68-75 (GPSGTGKT) lines the ATP pocket.

This sequence belongs to the ABC transporter superfamily. The complex is composed of two ATP-binding proteins (HVO_1886), two transmembrane proteins (HVO_1887) and a solute-binding protein (HVO_1888).

It localises to the cell membrane. Functionally, part of an ABC transporter complex involved in anions import. Responsible for energy coupling to the transport system. In Haloferax volcanii (strain ATCC 29605 / DSM 3757 / JCM 8879 / NBRC 14742 / NCIMB 2012 / VKM B-1768 / DS2) (Halobacterium volcanii), this protein is Probable anion import ATP-binding protein HVO_1886.